We begin with the raw amino-acid sequence, 345 residues long: Succinylglutamate desuccinylase (345 aa).

Positions 64, 67, and 161 each coordinate Zn(2+). Residue Glu225 is part of the active site.

It belongs to the AspA/AstE family. Succinylglutamate desuccinylase subfamily. The cofactor is Zn(2+).

It carries out the reaction N-succinyl-L-glutamate + H2O = L-glutamate + succinate. It participates in amino-acid degradation; L-arginine degradation via AST pathway; L-glutamate and succinate from L-arginine: step 5/5. Its function is as follows. Transforms N(2)-succinylglutamate into succinate and glutamate. The chain is Succinylglutamate desuccinylase from Shewanella pealeana (strain ATCC 700345 / ANG-SQ1).